The sequence spans 1605 residues: GTPase-activating protein pac-1 (1605 aa).

Residues 1–574 (MEEHHRRLHV…QRFIALFNSS (574 aa)) are required for localization to adherens junctions. 3 disordered regions span residues 293–430 (QRHP…ISTS), 529–556 (MRSG…LNAP), and 574–593 (SKTS…RSRT). The segment covering 323–334 (SKEDPSEDTGHD) has biased composition (basic and acidic residues). Low complexity-rich tracts occupy residues 353–365 (RNAS…SSRS), 420–430 (TTSSTSSISTS), and 530–552 (RSGG…TSRS). The region spanning 599 to 726 (RFALPGTILQ…WISVLQSSSE (128 aa)) is the PH domain. Composition is skewed to polar residues over residues 728 to 745 (GIAT…TTGR) and 846 to 855 (KNSQLQSPTA). Disordered regions lie at residues 728 to 752 (GIAT…NAVS) and 846 to 942 (KNSQ…AGAP). Residues 868–879 (SSSQTMATTSSS) show a composition bias toward low complexity. Basic residues predominate over residues 908 to 917 (SGRKWKKSKA). Residues 928–941 (GSSSGSQQQGAAGA) show a composition bias toward low complexity. A Rho-GAP domain is found at 948-1146 (VRIADCPTGS…TLIHYNLWMF (199 aa)). Disordered stretches follow at residues 1152–1176 (TEDA…YGVG), 1207–1258 (EGKG…AASV), 1277–1339 (SRQT…RRKR), 1438–1533 (TSDY…ARRH), and 1554–1605 (GIRK…DELL). Positions 1211–1229 (QKIKNMLRRNSRRDKSKSK) are enriched in basic residues. Polar residues-rich tracts occupy residues 1244-1257 (GWTQ…SAAS) and 1278-1300 (RQTV…RLDQ). Over residues 1301–1312 (SPSLESSLGSLP) the composition is skewed to low complexity. The segment covering 1438–1453 (TSDYSTTSSAPLSTNP) has biased composition (polar residues). Residues 1461–1476 (DQPNSSSDYASSDPSP) are compositionally biased toward low complexity. Polar residues-rich tracts occupy residues 1480-1493 (NPST…SNLA) and 1500-1515 (HATS…MSRS). Residues 1558 to 1575 (SSPDVSRDEVSDDEKNHQ) are compositionally biased toward basic and acidic residues.

As to quaternary structure, associated with the catenin-cadherin complex consisting of hmr-1, hmp-1 and hmp-2; this is mediated by interaction with picc-1.

Its subcellular location is the cytoplasm. The protein localises to the cell junction. It localises to the adherens junction. In terms of biological role, GTPase-activating protein for members of the Rho subfamily including Rac1, RhoA and cdc42 and other Ras-related subfamilies including let-60. Mediates radial (inner-outer) polarity and gastrulation by excluding par-6 from contacted cell surfaces; acts by inactivating cdc42 at inner cell surfaces which limits active cdc42 to outer cell surfaces devoid of cell-cell contacts, where cdc42 can bind and recruit par-6. Required for blastomere polarization. This Caenorhabditis elegans protein is GTPase-activating protein pac-1 (pac-1).